A 271-amino-acid chain; its full sequence is ATP synthase subunit a (271 aa).

Transmembrane regions (helical) follow at residues 38–58 (FWTL…LFLL), 100–120 (LIAP…LMDL), 146–166 (DVNI…FYSI), 220–240 (LIFI…LNVP), and 242–262 (AIFH…LTIV).

It belongs to the ATPase A chain family. F-type ATPases have 2 components, CF(1) - the catalytic core - and CF(0) - the membrane proton channel. CF(1) has five subunits: alpha(3), beta(3), gamma(1), delta(1), epsilon(1). CF(0) has three main subunits: a(1), b(2) and c(9-12). The alpha and beta chains form an alternating ring which encloses part of the gamma chain. CF(1) is attached to CF(0) by a central stalk formed by the gamma and epsilon chains, while a peripheral stalk is formed by the delta and b chains.

The protein resides in the cell inner membrane. In terms of biological role, key component of the proton channel; it plays a direct role in the translocation of protons across the membrane. The polypeptide is ATP synthase subunit a (Citrobacter koseri (strain ATCC BAA-895 / CDC 4225-83 / SGSC4696)).